The primary structure comprises 545 residues: CTP synthase (545 aa).

The interval 1–266 (MATNYIFVTG…DTFVCDRFRL (266 aa)) is amidoligase domain. Position 14 (Ser14) interacts with CTP. Ser14 contacts UTP. ATP-binding positions include 15-20 (SLGKGI) and Asp72. Asp72 and Glu140 together coordinate Mg(2+). CTP-binding positions include 147–149 (DIE), 187–192 (KTKPTQ), and Lys223. Residues 187 to 192 (KTKPTQ) and Lys223 each bind UTP. Residue 239–241 (KDV) coordinates ATP. A Glutamine amidotransferase type-1 domain is found at 291-542 (TIGMVGKYVE…VKAAKDYQDS (252 aa)). Residue Gly352 coordinates L-glutamine. The active-site Nucleophile; for glutamine hydrolysis is Cys379. L-glutamine contacts are provided by residues 380-383 (LGMQ), Glu403, and Arg470. Catalysis depends on residues His515 and Glu517.

Belongs to the CTP synthase family. In terms of assembly, homotetramer.

The enzyme catalyses UTP + L-glutamine + ATP + H2O = CTP + L-glutamate + ADP + phosphate + 2 H(+). The catalysed reaction is L-glutamine + H2O = L-glutamate + NH4(+). It catalyses the reaction UTP + NH4(+) + ATP = CTP + ADP + phosphate + 2 H(+). It functions in the pathway pyrimidine metabolism; CTP biosynthesis via de novo pathway; CTP from UDP: step 2/2. Its activity is regulated as follows. Allosterically activated by GTP, when glutamine is the substrate; GTP has no effect on the reaction when ammonia is the substrate. The allosteric effector GTP functions by stabilizing the protein conformation that binds the tetrahedral intermediate(s) formed during glutamine hydrolysis. Inhibited by the product CTP, via allosteric rather than competitive inhibition. Catalyzes the ATP-dependent amination of UTP to CTP with either L-glutamine or ammonia as the source of nitrogen. Regulates intracellular CTP levels through interactions with the four ribonucleotide triphosphates. This is CTP synthase from Actinobacillus pleuropneumoniae serotype 7 (strain AP76).